Reading from the N-terminus, the 1117-residue chain is Sodium-driven chloride bicarbonate exchanger (1117 aa).

The span at 1 to 14 shows a compositional bias: polar residues; it reads MQSGTCESFQSLSH. Disordered regions lie at residues 1-26, 57-94, 244-312, and 456-475; these read MQSG…VDRG, GRKS…FDTP, KQSE…PHQQ, and NGTA…GPEL. Topologically, residues 1 to 508 are cytoplasmic; that stretch reads MQSGTCESFQ…DFTDALSLQC (508 aa). Basic and acidic residues predominate over residues 15-26; it reads QRNDEEAVVDRG. A compositionally biased stretch (basic residues) spans 58–75; it reads RKSHRRHRHRGHKHRKRD. Over residues 76 to 89 the composition is skewed to basic and acidic residues; it reads RERDSGLEDGRESP. S88 is modified (phosphoserine). T93 is subject to Phosphothreonine. The span at 247–263 shows a compositional bias: polar residues; sequence EPNSMDKNAGQVVSPQS. S275 carries the phosphoserine modification. The chain crosses the membrane as a helical span at residues 509 to 529; that stretch reads LASFLFLYCACMSPVITFGGL. Residues 530–537 lie on the Extracellular side of the membrane; the sequence is LGEATEGR. A helical transmembrane segment spans residues 538–558; sequence ISAIESLFGASMTGIAYSLFG. The Cytoplasmic portion of the chain corresponds to 559-561; sequence GQP. A helical membrane pass occupies residues 562 to 582; sequence LTILGSTGPVLVFEKILFKFC. The Extracellular portion of the chain corresponds to 583 to 595; the sequence is KEYGLSYLSLRAS. A helical transmembrane segment spans residues 596 to 616; it reads IGLWTATLCIILVATDASSLV. Residues 617-625 lie on the Cytoplasmic side of the membrane; the sequence is CYITRFTEE. Residues 626–646 traverse the membrane as a helical segment; it reads AFASLICIIFIYEALEKLFEL. At 647-719 the chain is on the extracellular side; it reads SEAYPINMHN…VGRACGHEHP (73 aa). 4 N-linked (GlcNAc...) asparagine glycosylation sites follow: N673, N676, N686, and N696. A helical membrane pass occupies residues 720-740; sequence YVPDVLFWSVILFFSTVTLSA. Residues 741-761 are Cytoplasmic-facing; it reads TLKQFKTSRYFPTKVRSIVSD. A helical transmembrane segment spans residues 762–782; that stretch reads FAVFLTILCMVLIDYAIGIPS. At 783 to 808 the chain is on the extracellular side; sequence PKLQVPSVFKPTRDDRGWFVTPLGPN. Residues 809-829 traverse the membrane as a helical segment; sequence PWWTVIAAIIPALLCTILIFM. Residues 830–854 lie on the Cytoplasmic side of the membrane; the sequence is DQQITAVIINRKEHKLKKGCGYHLD. The helical transmembrane segment at 855-875 threads the bilayer; that stretch reads LLMVAVMLGVCSIMGLPWFVA. Topologically, residues 876–911 are extracellular; it reads ATVLSITHVNSLKLESECSAPGEQPKFLGIREQRVT. The helical transmembrane segment at 912-932 threads the bilayer; the sequence is GLMIFILMGSSVFMTSILKFI. The Cytoplasmic portion of the chain corresponds to 933–934; that stretch reads PM. A helical transmembrane segment spans residues 935 to 955; that stretch reads PVLYGVFLYMGASSLKGIQFF. At 956-997 the chain is on the extracellular side; it reads DRIKLFWMPAKHQPDFIYLRHVPLRKVHLFTVIQMSCLGLLW. A helical membrane pass occupies residues 998–1018; that stretch reads IIKVSRAAIVFPMMVLALVFV. Topologically, residues 1019 to 1117 are cytoplasmic; that stretch reads RKLMDFLFTK…SSFPSKSSPS (99 aa). A phosphoserine mark is found at S1056 and S1084.

Belongs to the anion exchanger (TC 2.A.31) family. N-glycosylated.

It is found in the basolateral cell membrane. The protein localises to the apical cell membrane. Its subcellular location is the cell projection. It localises to the dendrite. The protein resides in the axon. It is found in the perikaryon. The protein localises to the presynapse. Its subcellular location is the postsynapse. In terms of biological role, sodium/bicarbonate cotransporter which plays an important role in regulating intracellular pH. Has been shown to act as a sodium/bicarbonate cotransporter in exchange for intracellular chloride. Has also been shown to act as a sodium/biocarbonate cotransporter which does not couple net influx of bicarbonate to net efflux of chloride, with the observed chloride efflux being due to chloride self-exchange. Controls neuronal pH and may contribute to the secretion of cerebrospinal fluid. Acting on presynaptic intracellular pH, it promotes GABA release, reduces the excitability of CA1 pyramidal neurons, and modulates short-term synaptic plasticity. Required in retinal cells to maintain normal pH which is necessary for normal vision. In the kidney, likely to mediate bicarbonate reclamation in the apical membrane of the proximal tubules. This Bos taurus (Bovine) protein is Sodium-driven chloride bicarbonate exchanger.